The chain runs to 204 residues: Leucyl/phenylalanyl-tRNA--protein transferase (204 aa).

The protein belongs to the L/F-transferase family.

It is found in the cytoplasm. It catalyses the reaction N-terminal L-lysyl-[protein] + L-leucyl-tRNA(Leu) = N-terminal L-leucyl-L-lysyl-[protein] + tRNA(Leu) + H(+). It carries out the reaction N-terminal L-arginyl-[protein] + L-leucyl-tRNA(Leu) = N-terminal L-leucyl-L-arginyl-[protein] + tRNA(Leu) + H(+). The enzyme catalyses L-phenylalanyl-tRNA(Phe) + an N-terminal L-alpha-aminoacyl-[protein] = an N-terminal L-phenylalanyl-L-alpha-aminoacyl-[protein] + tRNA(Phe). Its function is as follows. Functions in the N-end rule pathway of protein degradation where it conjugates Leu, Phe and, less efficiently, Met from aminoacyl-tRNAs to the N-termini of proteins containing an N-terminal arginine or lysine. The polypeptide is Leucyl/phenylalanyl-tRNA--protein transferase (Brucella abortus (strain 2308)).